Here is a 481-residue protein sequence, read N- to C-terminus: MNWEVVIGLEIHTQLSTKSKLFSGAAVGFGAEPNTQTTLVDLGMPGALPVFNKEALRMAVMFGHAINAEIGMTSVFARKNYFYPDLPKGYQTSQMDHPIVGKGYLDVMLDDGTTSRVGITRAHLEEDAGKSLHEDFQGMTGIDLNRSSTPLLEIVSEPDIRSAKEAVAYVKMIHSIVTYLGICDGNMAEGSMRCDINLSLRPKGQKEYGTRTEIKNVNSFRFIEKAIYTEIERQADILEDGGRIIQETRLYDPEKNETRSMRSKEDANDYRYFPCPDLLPVVLTQEYVDNIKATLPELPSQKAARFQSEHALSEYDANVLSSSRAMADFFEKANNVVKDPKLTANWVMGELSKLLNQEQLDIENSPVNAQAFGELLVRIKDNTINGKTAKDVFQAMWDGEGSADAIIEAKGLKQVTDTGAIEAMIQTILDANAAQVEQYRAADEDKQKKMIGFFVGQVMKASQGKANPGLVNPILAKMLKG.

It belongs to the GatB/GatE family. GatB subfamily. In terms of assembly, heterotrimer of A, B and C subunits.

The catalysed reaction is L-glutamyl-tRNA(Gln) + L-glutamine + ATP + H2O = L-glutaminyl-tRNA(Gln) + L-glutamate + ADP + phosphate + H(+). It carries out the reaction L-aspartyl-tRNA(Asn) + L-glutamine + ATP + H2O = L-asparaginyl-tRNA(Asn) + L-glutamate + ADP + phosphate + 2 H(+). Allows the formation of correctly charged Asn-tRNA(Asn) or Gln-tRNA(Gln) through the transamidation of misacylated Asp-tRNA(Asn) or Glu-tRNA(Gln) in organisms which lack either or both of asparaginyl-tRNA or glutaminyl-tRNA synthetases. The reaction takes place in the presence of glutamine and ATP through an activated phospho-Asp-tRNA(Asn) or phospho-Glu-tRNA(Gln). This chain is Aspartyl/glutamyl-tRNA(Asn/Gln) amidotransferase subunit B, found in Marinomonas sp. (strain MWYL1).